We begin with the raw amino-acid sequence, 148 residues long: Tetratricopeptide repeat protein 32 (148 aa).

3 TPR repeats span residues 12–45 (SSAA…CARH), 55–88 (ATAY…LPSF), and 89–122 (EVPY…NPGF).

This is Tetratricopeptide repeat protein 32 (Ttc32) from Mus musculus (Mouse).